We begin with the raw amino-acid sequence, 253 residues long: Indole-3-glycerol phosphate synthase (253 aa).

The protein belongs to the TrpC family.

It catalyses the reaction 1-(2-carboxyphenylamino)-1-deoxy-D-ribulose 5-phosphate + H(+) = (1S,2R)-1-C-(indol-3-yl)glycerol 3-phosphate + CO2 + H2O. Its pathway is amino-acid biosynthesis; L-tryptophan biosynthesis; L-tryptophan from chorismate: step 4/5. The chain is Indole-3-glycerol phosphate synthase from Bacillus cereus (strain ATCC 10987 / NRS 248).